We begin with the raw amino-acid sequence, 601 residues long: Transcription factor Ken (601 aa).

Positions 33-101 (ADLTIVCENK…LYSGQTCITS (69 aa)) constitute a BTB domain. Disordered stretches follow at residues 188 to 276 (AAEC…TINP), 331 to 365 (LSDG…DNQP), and 471 to 491 (DHPE…AGSN). 2 stretches are compositionally biased toward basic and acidic residues: residues 190-200 (ECERSGGHNNK) and 207-216 (CTHKDNKSDK). Residues 223-234 (NLSNAPPSGTSG) are compositionally biased toward polar residues. A compositionally biased stretch (low complexity) spans 235-247 (SNSNISTSSNHQQ). Basic residues predominate over residues 248-258 (QQHHHHHHHNH). The segment covering 259 to 275 (NNNNNNNNNNSSSSTIN) has biased composition (low complexity). Residues 476–490 (RSGSASGSGANLAGS) show a composition bias toward low complexity. C2H2-type zinc fingers lie at residues 500 to 522 (YRCE…LRVH), 528 to 551 (FACR…CSVH), and 567 to 590 (YSCC…SGHH).

As to expression, expressed from stage 5 in two rather faint stripes at positions of 64% (anterior domain; AD) and 17% (posterior domain; PD) egg length. During early gastrulation, at stage 6, these two stripes become more evident and detectable at the region posterior to the cephalic furrow and in the hindgut primordium. The AD disappears as gastrulation proceeds, while the PD remains. At stage 15, the AD appears again in the foregut, and PD expression in the hindgut and anal pad. In imaginal disks, it is ubiquitously expressed in both males and females in genital and eye-antennal disks. Not expressed in the brain. In genital disks, it is expressed along the margin of the anterior bulbus in males, while in females it is expressed in the posterior compartment along the anterior-posterior border, with medial expansion in the most posterior region.

It localises to the nucleus. Its function is as follows. Transcription factor required for terminalia development. Negative regulator of the JAK/STAT pathway: represses JAK/STAT-dependent expression of ventral veins lacking (vvl) in the posterior spiracles. This Drosophila melanogaster (Fruit fly) protein is Transcription factor Ken (ken).